The chain runs to 242 residues: Lactate utilization protein A 1 (242 aa).

The protein belongs to the LutA/YkgE family.

Is involved in L-lactate degradation and allows cells to grow with lactate as the sole carbon source. In Bacillus anthracis (strain CDC 684 / NRRL 3495), this protein is Lactate utilization protein A 1.